Consider the following 382-residue polypeptide: Gibberellin 2-beta-dioxygenase 1 (382 aa).

Residues 189–321 (DSDCLLRINH…RLSTIYFASP (133 aa)) enclose the Fe2OG dioxygenase domain. A 2-oxoglutarate-binding site is contributed by Y199. H241, D243, and H302 together coordinate Fe cation. Positions 312 and 314 each coordinate 2-oxoglutarate.

Belongs to the iron/ascorbate-dependent oxidoreductase family. GA2OX subfamily. L-ascorbate is required as a cofactor. The cofactor is Fe(2+). As to expression, expressed in roots, shoot apex, and in the basal region of leaf primordia and young leaves.

The catalysed reaction is gibberellin A1 + 2-oxoglutarate + O2 = gibberellin A8 + succinate + CO2. In terms of biological role, catalyzes the 2-beta-hydroxylation of several biologically active gibberellins, leading to the homeostatic regulation of their endogenous level. Catabolism of gibberellins (GAs) plays a central role in plant development. Controls the level of bioactive GAs in the shoot apical meristem, which regulates the vegetative to reproductive phase transition. In vitro, converts GA1, GA4, GA9, GA20, and GA44 to the corresponding 2-beta-hydroxylated products GA8, GA34, GA51, GA29, and GA98, respectively. This chain is Gibberellin 2-beta-dioxygenase 1, found in Oryza sativa subsp. japonica (Rice).